We begin with the raw amino-acid sequence, 416 residues long: D-amino acid dehydrogenase (416 aa).

3 to 17 (VVILGAGVIGVTSAW) is a binding site for FAD.

Belongs to the DadA oxidoreductase family. FAD is required as a cofactor.

It carries out the reaction a D-alpha-amino acid + A + H2O = a 2-oxocarboxylate + AH2 + NH4(+). It functions in the pathway amino-acid degradation; D-alanine degradation; NH(3) and pyruvate from D-alanine: step 1/1. Oxidative deamination of D-amino acids. The chain is D-amino acid dehydrogenase from Rhizorhabdus wittichii (strain DSM 6014 / CCUG 31198 / JCM 15750 / NBRC 105917 / EY 4224 / RW1) (Sphingomonas wittichii).